We begin with the raw amino-acid sequence, 260 residues long: Ribosomal RNA small subunit methyltransferase A (260 aa).

Residues asparagine 16, leucine 18, glycine 43, glutamate 64, aspartate 86, and asparagine 108 each coordinate S-adenosyl-L-methionine.

Belongs to the class I-like SAM-binding methyltransferase superfamily. rRNA adenine N(6)-methyltransferase family. RsmA subfamily.

It is found in the cytoplasm. The enzyme catalyses adenosine(1518)/adenosine(1519) in 16S rRNA + 4 S-adenosyl-L-methionine = N(6)-dimethyladenosine(1518)/N(6)-dimethyladenosine(1519) in 16S rRNA + 4 S-adenosyl-L-homocysteine + 4 H(+). In terms of biological role, specifically dimethylates two adjacent adenosines (A1518 and A1519) in the loop of a conserved hairpin near the 3'-end of 16S rRNA in the 30S particle. May play a critical role in biogenesis of 30S subunits. The polypeptide is Ribosomal RNA small subunit methyltransferase A (Buchnera aphidicola subsp. Baizongia pistaciae (strain Bp)).